Consider the following 549-residue polypeptide: MSRRQTCSLLLIAFGLFYLVPLSNHGLWIPDETRYAQISQAMLLGGDWVSPHFLGLRYFEKPVAGYWMIALGQAVFGENLFGVRIASVVATALSVLLAYLLARRLWRDPRTSLACALLYASFGLIAGQSGYANLDPQFTFWVNLSLVALWHALDAGSRRARLLGWTLLGLACGMGFLTKGFLAWLLPVLVALPYMLWQRRWRELLGYGALAVLAALLVCLPWALAVHAREADYWRFFFWHEHIRRFAGEDAQHSRPWWFYLPLLAVACLPWSGLLPSALRQAWHERRQAPVVFLALWLLLPLAFFSLSRGKLPTYIMPCLLPLALLMGHALVQRLRLGNSVALRGNGLLNLGLALLALAALAYLQLRKPVYQEEPFELFLVLLVIGAWAAAGLAQWRYPLRAWAAPLLASWVLIALLPAAMPNHVVQNKTPDLFVAEHLDELTGARHLLSNDLGAASALAWRLRRSDVTLYDTRGELKYGLSYPEHSQRSVPLADIRQWLWRARQDGSIAVLLRINSASDRYQLALLPGDGERYRNGNLVLAILPQVRP.

12 helical membrane passes run 9–29 (LLLI…GLWI), 80–100 (LFGV…LAYL), 112–132 (SLAC…SGYA), 136–156 (PQFT…LDAG), 176–196 (FLTK…PYML), 204–224 (LLGY…PWAL), 256–276 (PWWF…GLLP), 288–308 (QAPV…FSLS), 312–332 (LPTY…HALV), 346–366 (NGLL…YLQL), 376–396 (FELF…LAQW), and 402–422 (AWAA…AAMP).

This sequence belongs to the glycosyltransferase 83 family.

Its subcellular location is the cell inner membrane. It carries out the reaction 4-amino-4-deoxy-alpha-L-arabinopyranosyl di-trans,octa-cis-undecaprenyl phosphate + lipid IVA = lipid IIA + di-trans,octa-cis-undecaprenyl phosphate.. It participates in lipopolysaccharide metabolism; 4-amino-4-deoxy-beta-L-arabinose-lipid A biosynthesis. Functionally, catalyzes the transfer of the L-Ara4N moiety of the glycolipid undecaprenyl phosphate-alpha-L-Ara4N to lipid A. The modified arabinose is attached to lipid A and is required for resistance to polymyxin and cationic antimicrobial peptides. This chain is Undecaprenyl phosphate-alpha-4-amino-4-deoxy-L-arabinose arabinosyl transferase, found in Pseudomonas aeruginosa (strain ATCC 15692 / DSM 22644 / CIP 104116 / JCM 14847 / LMG 12228 / 1C / PRS 101 / PAO1).